We begin with the raw amino-acid sequence, 183 residues long: ATP synthase subunit delta (183 aa).

Belongs to the ATPase delta chain family. In terms of assembly, F-type ATPases have 2 components, F(1) - the catalytic core - and F(0) - the membrane proton channel. F(1) has five subunits: alpha(3), beta(3), gamma(1), delta(1), epsilon(1). F(0) has three main subunits: a(1), b(2) and c(10-14). The alpha and beta chains form an alternating ring which encloses part of the gamma chain. F(1) is attached to F(0) by a central stalk formed by the gamma and epsilon chains, while a peripheral stalk is formed by the delta and b chains.

The protein resides in the cell inner membrane. Functionally, f(1)F(0) ATP synthase produces ATP from ADP in the presence of a proton or sodium gradient. F-type ATPases consist of two structural domains, F(1) containing the extramembraneous catalytic core and F(0) containing the membrane proton channel, linked together by a central stalk and a peripheral stalk. During catalysis, ATP synthesis in the catalytic domain of F(1) is coupled via a rotary mechanism of the central stalk subunits to proton translocation. This protein is part of the stalk that links CF(0) to CF(1). It either transmits conformational changes from CF(0) to CF(1) or is implicated in proton conduction. This Solidesulfovibrio magneticus (strain ATCC 700980 / DSM 13731 / RS-1) (Desulfovibrio magneticus) protein is ATP synthase subunit delta.